A 393-amino-acid chain; its full sequence is NAD(P)H-quinone oxidoreductase subunit H, chloroplastic (393 aa).

This sequence belongs to the complex I 49 kDa subunit family. NDH is composed of at least 16 different subunits, 5 of which are encoded in the nucleus.

It is found in the plastid. It localises to the chloroplast thylakoid membrane. It carries out the reaction a plastoquinone + NADH + (n+1) H(+)(in) = a plastoquinol + NAD(+) + n H(+)(out). It catalyses the reaction a plastoquinone + NADPH + (n+1) H(+)(in) = a plastoquinol + NADP(+) + n H(+)(out). In terms of biological role, NDH shuttles electrons from NAD(P)H:plastoquinone, via FMN and iron-sulfur (Fe-S) centers, to quinones in the photosynthetic chain and possibly in a chloroplast respiratory chain. The immediate electron acceptor for the enzyme in this species is believed to be plastoquinone. Couples the redox reaction to proton translocation, and thus conserves the redox energy in a proton gradient. The polypeptide is NAD(P)H-quinone oxidoreductase subunit H, chloroplastic (Liriodendron tulipifera (Tuliptree)).